A 235-amino-acid chain; its full sequence is ATP synthase subunit a (235 aa).

The next 5 membrane-spanning stretches (helical) occupy residues 17–37 (TTNI…LYGM), 76–96 (SFFA…GLIF), 113–133 (PVVT…AGVA), 179–201 (LLMS…PGLF), and 211–230 (VFIG…VYIS).

Belongs to the ATPase A chain family. F-type ATPases have 2 components, CF(1) - the catalytic core - and CF(0) - the membrane proton channel. CF(1) has five subunits: alpha(3), beta(3), gamma(1), delta(1), epsilon(1). CF(0) has three main subunits: a(1), b(2) and c(9-12). The alpha and beta chains form an alternating ring which encloses part of the gamma chain. CF(1) is attached to CF(0) by a central stalk formed by the gamma and epsilon chains, while a peripheral stalk is formed by the delta and b chains.

It is found in the cell membrane. Its function is as follows. Key component of the proton channel; it plays a direct role in the translocation of protons across the membrane. This Limosilactobacillus reuteri subsp. reuteri (strain JCM 1112) (Lactobacillus reuteri) protein is ATP synthase subunit a.